The sequence spans 73 residues: Small ribosomal subunit protein uS15c (73 aa).

This sequence belongs to the universal ribosomal protein uS15 family. In terms of assembly, part of the 30S ribosomal subunit.

Its subcellular location is the plastid. It localises to the chloroplast. The sequence is that of Small ribosomal subunit protein uS15c (rps15) from Welwitschia mirabilis (Tree tumbo).